The chain runs to 416 residues: Enterobactin exporter EntS (416 aa).

At 1–21 the chain is on the cytoplasmic side; that stretch reads MNKQSWLLNLSLLKTHPAFRA. The helical transmembrane segment at 22–42 threads the bilayer; it reads VFLARFISIVSLGLLGVAVPV. At 43–55 the chain is on the periplasmic side; sequence QIQMMTHSTWQVG. A helical transmembrane segment spans residues 56–76; sequence LSVTLTGGAMFVGLMVGGVLA. The Cytoplasmic portion of the chain corresponds to 77–83; the sequence is DRYERKK. A helical transmembrane segment spans residues 84–104; sequence VILLARGTCGIGFIGLCLNAL. The Periplasmic segment spans residues 105–109; sequence LPEPS. A helical membrane pass occupies residues 110–130; the sequence is LLAIYLLGLWDGFFASLGVTA. Residues 131–156 lie on the Cytoplasmic side of the membrane; it reads LLAATPALVGRENLMQAGAITMLTVR. Residues 157–177 form a helical membrane-spanning segment; the sequence is LGSVISPMIGGLLLATGGVAW. N178 is a topological domain (periplasmic). Residues 179–199 traverse the membrane as a helical segment; the sequence is YGLAAAGTFITLLPLLSLPAL. At 200–218 the chain is on the cytoplasmic side; the sequence is PPPPQPREHPLKSLLAGFR. Residues 219–239 traverse the membrane as a helical segment; the sequence is FLLASPLVGGIALLGGLLTMA. The Periplasmic segment spans residues 240–256; it reads SAVRVLYPALADNWQMS. A helical membrane pass occupies residues 257-277; it reads AAQIGFLYAAIPLGAAIGALT. Over 278-287 the chain is Cytoplasmic; it reads SGKLAHSARP. Residues 288 to 307 form a helical membrane-spanning segment; the sequence is GLLMLLSTLGSFLAIGLFGL. Residues 308-313 lie on the Periplasmic side of the membrane; that stretch reads MPMWIL. The helical transmembrane segment at 314–336 threads the bilayer; the sequence is GVVCLALFGWLSAVSSLLQYTML. The Cytoplasmic segment spans residues 337–356; the sequence is QTQTPEAMLGRINGLWTAQN. The chain crosses the membrane as a helical span at residues 357-377; the sequence is VTGDAIGAALLGGLGAMMTPV. A378 is a topological domain (periplasmic). Residues 379-399 form a helical membrane-spanning segment; sequence SASASGFGLLIIGVLLLLVLV. Topologically, residues 400-416 are cytoplasmic; it reads ELRHFRQTPPQVTASDS.

The protein belongs to the major facilitator superfamily. EntS (TC 2.A.1.38) family.

It localises to the cell inner membrane. Its function is as follows. Component of an export pathway for enterobactin. This Escherichia coli (strain K12 / MC4100 / BW2952) protein is Enterobactin exporter EntS.